The primary structure comprises 285 residues: Bifunctional protein FolD (285 aa).

NADP(+) is bound by residues 165–167 (GRS) and S190.

The protein belongs to the tetrahydrofolate dehydrogenase/cyclohydrolase family. In terms of assembly, homodimer.

It catalyses the reaction (6R)-5,10-methylene-5,6,7,8-tetrahydrofolate + NADP(+) = (6R)-5,10-methenyltetrahydrofolate + NADPH. The enzyme catalyses (6R)-5,10-methenyltetrahydrofolate + H2O = (6R)-10-formyltetrahydrofolate + H(+). Its pathway is one-carbon metabolism; tetrahydrofolate interconversion. In terms of biological role, catalyzes the oxidation of 5,10-methylenetetrahydrofolate to 5,10-methenyltetrahydrofolate and then the hydrolysis of 5,10-methenyltetrahydrofolate to 10-formyltetrahydrofolate. This chain is Bifunctional protein FolD, found in Streptococcus pneumoniae serotype 4 (strain ATCC BAA-334 / TIGR4).